Reading from the N-terminus, the 504-residue chain is MNLFSALSLDTWVLLAIILVLLYRYGTRTHGLFKKQGIPGPKPLPFLGTVLNYYKGLWKFDMECYEKYGKTWGLFDGQMPLFVITDPEMIKNVLVKECFSVFTNRREFGPVGIMSKAISISKDEEWKRYRALLSPTFTSGKLKEMFPVIEQYGDILVKYLMQEAEKGKPVTMKDVLGAYSIDVITSTSFGVNVDSLNNPEDPFVEKAKGILRVDFFDPLVFSVVLFPFLTPVYEMLNICMFPKDSIEFFKKFVNRMKESRLDSKQKHRVDFLQLMMNAHNNSKDKDSHKALSDMEITAQSIVFIFAGYETTSSTLSFTLYCLATHPDIQKKLQEEIDETLPNKAPPTYDTVMEMEYLDMVLNETLRLYPIGNRLERFCKKDVELNGVYIPKGSTVMIPSYALHHDPQHWPEPEEFQPERFSKENKGSIDPYLYMPFGIGPRNCIGMRFAFMTMKLALTKVMQNFSFQPCQETQIPLKLSRQGLLQPEKPIVLKVVPRDVVITGA.

Cys-443 lines the heme pocket.

The protein belongs to the cytochrome P450 family. Heme is required as a cofactor. Expressed in liver. Also expressed in the kidneys of female mice, with traces in the stomach, ovary, and heart of female mice and in the testis of male mice.

The protein resides in the endoplasmic reticulum membrane. It localises to the microsome membrane. The catalysed reaction is an organic molecule + reduced [NADPH--hemoprotein reductase] + O2 = an alcohol + oxidized [NADPH--hemoprotein reductase] + H2O + H(+). This chain is Cytochrome P450 3A41 (Cyp3a41a), found in Mus musculus (Mouse).